Here is a 453-residue protein sequence, read N- to C-terminus: GTPase Der (453 aa).

2 EngA-type G domains span residues 3-167 and 187-360; these read PIIV…ISEK and IKVA…EDSK. GTP-binding positions include 9–16, 57–61, 119–122, 193–200, 240–244, and 305–308; these read GRTNVGKS, DTAGL, NKID, GRPNVGKS, DTAGA, and NKCD. A KH-like domain is found at 361–445; that stretch reads RKISTSTLIR…PIQIQFKDNE (85 aa).

This sequence belongs to the TRAFAC class TrmE-Era-EngA-EngB-Septin-like GTPase superfamily. EngA (Der) GTPase family. In terms of assembly, associates with the 50S ribosomal subunit.

Functionally, GTPase that plays an essential role in the late steps of ribosome biogenesis. The sequence is that of GTPase Der from Buchnera aphidicola subsp. Acyrthosiphon pisum (strain Tuc7).